The primary structure comprises 156 residues: MSINATLFVQAIVFAILVWFTMKFVWPPIMKALDERAQKIADGLAAADKAKSELSVANKRVEEELAKSRGESAVRLAEAERRAQALIEEAKAKATEEGSKIIAAAKVEAEQQTVKARETLREQVAALAVKGAEQILRKEVNAGVHADLLGRLKTEL.

A helical transmembrane segment spans residues 7-27; the sequence is LFVQAIVFAILVWFTMKFVWP.

This sequence belongs to the ATPase B chain family. F-type ATPases have 2 components, F(1) - the catalytic core - and F(0) - the membrane proton channel. F(1) has five subunits: alpha(3), beta(3), gamma(1), delta(1), epsilon(1). F(0) has three main subunits: a(1), b(2) and c(10-14). The alpha and beta chains form an alternating ring which encloses part of the gamma chain. F(1) is attached to F(0) by a central stalk formed by the gamma and epsilon chains, while a peripheral stalk is formed by the delta and b chains.

The protein localises to the cell inner membrane. Its function is as follows. F(1)F(0) ATP synthase produces ATP from ADP in the presence of a proton or sodium gradient. F-type ATPases consist of two structural domains, F(1) containing the extramembraneous catalytic core and F(0) containing the membrane proton channel, linked together by a central stalk and a peripheral stalk. During catalysis, ATP synthesis in the catalytic domain of F(1) is coupled via a rotary mechanism of the central stalk subunits to proton translocation. In terms of biological role, component of the F(0) channel, it forms part of the peripheral stalk, linking F(1) to F(0). The sequence is that of ATP synthase subunit b from Polaromonas sp. (strain JS666 / ATCC BAA-500).